A 401-amino-acid chain; its full sequence is Sulfate adenylyltransferase (401 aa).

It belongs to the sulfate adenylyltransferase family.

The catalysed reaction is sulfate + ATP + H(+) = adenosine 5'-phosphosulfate + diphosphate. Its pathway is sulfur metabolism; hydrogen sulfide biosynthesis; sulfite from sulfate: step 1/3. This chain is Sulfate adenylyltransferase, found in Alcanivorax borkumensis (strain ATCC 700651 / DSM 11573 / NCIMB 13689 / SK2).